A 364-amino-acid polypeptide reads, in one-letter code: WAT1-related protein At3g30340 (364 aa).

10 consecutive transmembrane segments (helical) span residues 9-29 (WKAV…NVMF), 41-61 (VATT…AIFL), 76-96 (SLFF…LIGL), 102-122 (TFSL…ALVF), 138-158 (LLGT…KGTA), 183-203 (WAMG…WFIV), 215-235 (YTST…LSLI), 251-271 (VLAL…GMSW), 277-297 (GAVF…IFSF), and 304-324 (IYCG…ILLW). EamA domains follow at residues 26–152 (NVMF…LVLT) and 195–323 (IIWS…YILL).

It belongs to the drug/metabolite transporter (DMT) superfamily. Plant drug/metabolite exporter (P-DME) (TC 2.A.7.4) family.

The protein localises to the membrane. In Arabidopsis thaliana (Mouse-ear cress), this protein is WAT1-related protein At3g30340.